Here is a 96-residue protein sequence, read N- to C-terminus: Protein C4 (96 aa).

Gly-2 carries N-myristoyl glycine; by host lipidation. The tract at residues 66–96 (STDDLQGEDSRQPMTLTPRQLTQDVSRRLLM) is disordered. The span at 77–89 (QPMTLTPRQLTQD) shows a compositional bias: polar residues.

The protein belongs to the geminiviridae protein AC4/C4 family.

Its subcellular location is the host cell membrane. Pathogenicity determinant. May act as a suppressor of RNA-mediated gene silencing, also known as post-transcriptional gene silencing (PTGS), a mechanism of plant viral defense that limits the accumulation of viral RNAs. This is Protein C4 from Solanum lycopersicum (Tomato).